The primary structure comprises 651 residues: Probable Xaa-Pro aminopeptidase P (651 aa).

Asp-448, Asp-459, Glu-557, and Glu-571 together coordinate Mn(2+).

It belongs to the peptidase M24B family. Mn(2+) serves as cofactor.

The catalysed reaction is Release of any N-terminal amino acid, including proline, that is linked to proline, even from a dipeptide or tripeptide.. In terms of biological role, catalyzes the removal of a penultimate prolyl residue from the N-termini of peptides. This chain is Probable Xaa-Pro aminopeptidase P (AMPP), found in Coccidioides posadasii (strain C735) (Valley fever fungus).